Consider the following 222-residue polypeptide: Eukaryotic translation initiation factor 3 subunit K (222 aa).

The PCI domain occupies 46 to 208 (YDLEANLAVL…KIKTKNITEK (163 aa)).

Belongs to the eIF-3 subunit K family. As to quaternary structure, component of the eukaryotic translation initiation factor 3 (eIF-3) complex. The eIF-3 complex interacts with pix.

It localises to the cytoplasm. Its function is as follows. Component of the eukaryotic translation initiation factor 3 (eIF-3) complex, which is involved in protein synthesis of a specialized repertoire of mRNAs and, together with other initiation factors, stimulates binding of mRNA and methionyl-tRNAi to the 40S ribosome. The eIF-3 complex specifically targets and initiates translation of a subset of mRNAs involved in cell proliferation. The sequence is that of Eukaryotic translation initiation factor 3 subunit K from Drosophila mojavensis (Fruit fly).